A 278-amino-acid polypeptide reads, in one-letter code: Large ribosomal subunit protein uL2 (278 aa).

Disordered stretches follow at residues 29–53 (PEKSLVRPLSKTGGRNSSGRITTRH) and 223–278 (GVAM…GKKR). Positions 255–268 (GRTRRPGKESDKLI) are enriched in basic and acidic residues. Residues 269 to 278 (VRRRRTGKKR) are compositionally biased toward basic residues.

Belongs to the universal ribosomal protein uL2 family. As to quaternary structure, part of the 50S ribosomal subunit. Forms a bridge to the 30S subunit in the 70S ribosome.

One of the primary rRNA binding proteins. Required for association of the 30S and 50S subunits to form the 70S ribosome, for tRNA binding and peptide bond formation. It has been suggested to have peptidyltransferase activity; this is somewhat controversial. Makes several contacts with the 16S rRNA in the 70S ribosome. The polypeptide is Large ribosomal subunit protein uL2 (Kineococcus radiotolerans (strain ATCC BAA-149 / DSM 14245 / SRS30216)).